We begin with the raw amino-acid sequence, 1728 residues long: Mitochondrial 3' processome subunit 1 (1728 aa).

The N-terminal 117 residues, 1–117 (MRRLILSQTL…AGKMTGSSRF (117 aa)), are a transit peptide targeting the mitochondrion. Disordered regions lie at residues 45 to 71 (HRKR…SGDG), 88 to 156 (ESPV…IGQQ), and 829 to 863 (GCNR…PKGT).

Component of the mitochondrial 3' processome (MPsome) complex composed at least of terminal uridylyltransferase KRET1/TUT1, 3'-5' exonuclease DSS1, MPSS1, MPSS2 and MPSS3. Within the complex, interacts with KRET1.

The protein localises to the mitochondrion. Its function is as follows. As part of the mitochondrial 3' processome (MPsome), involved in the maturation of guided RNA (gRNA) precursors. This chain is Mitochondrial 3' processome subunit 1, found in Trypanosoma brucei brucei.